Reading from the N-terminus, the 71-residue chain is Phenoloxidase 3 (71 aa).

Cu cation is bound by residues His-3 and His-29.

Belongs to the tyrosinase family. Cu(2+) is required as a cofactor. In terms of processing, upon activation, a trypsin type protease cleaves prophenol oxidase to yield the active enzyme. Hemocytes and plasma.

It is found in the secreted. It catalyses the reaction 2 L-dopa + O2 = 2 L-dopaquinone + 2 H2O. The catalysed reaction is L-tyrosine + O2 = L-dopaquinone + H2O. Functionally, this is a copper-containing oxidase that functions in the formation of pigments such as melanins and other polyphenolic compounds. Catalyzes the rate-limiting conversions of tyrosine to DOPA, DOPA to DOPA-quinone and possibly 5,6 dihydroxyindole to indole-5'6 quinone. In Sarcophaga argyrostoma (Flesh fly), this protein is Phenoloxidase 3.